We begin with the raw amino-acid sequence, 479 residues long: Glutamyl-tRNA(Gln) amidotransferase subunit A (479 aa).

Catalysis depends on charge relay system residues Lys74 and Ser149. Ser173 functions as the Acyl-ester intermediate in the catalytic mechanism.

The protein belongs to the amidase family. GatA subfamily. As to quaternary structure, heterotrimer of A, B and C subunits.

It catalyses the reaction L-glutamyl-tRNA(Gln) + L-glutamine + ATP + H2O = L-glutaminyl-tRNA(Gln) + L-glutamate + ADP + phosphate + H(+). Functionally, allows the formation of correctly charged Gln-tRNA(Gln) through the transamidation of misacylated Glu-tRNA(Gln) in organisms which lack glutaminyl-tRNA synthetase. The reaction takes place in the presence of glutamine and ATP through an activated gamma-phospho-Glu-tRNA(Gln). This Cenarchaeum symbiosum (strain A) protein is Glutamyl-tRNA(Gln) amidotransferase subunit A.